Here is an 82-residue protein sequence, read N- to C-terminus: Small ribosomal subunit protein uS17 (82 aa).

It belongs to the universal ribosomal protein uS17 family. As to quaternary structure, part of the 30S ribosomal subunit.

In terms of biological role, one of the primary rRNA binding proteins, it binds specifically to the 5'-end of 16S ribosomal RNA. The protein is Small ribosomal subunit protein uS17 of Aeromonas salmonicida (strain A449).